Here is a 114-residue protein sequence, read N- to C-terminus: rRNA-processing protein cgrA (114 aa).

Residues 1–13 (MSSAAPAPSTHAA) are compositionally biased toward low complexity. 2 disordered regions span residues 1 to 47 (MSSA…AARK) and 77 to 114 (RRAA…LLNS). Positions 40-101 (TKRAAARKEQ…EKMHRKRVER (62 aa)) form a coiled coil. Positions 77–93 (RRAAKEEKERYEKMAEK) are enriched in basic and acidic residues. Basic residues predominate over residues 94–114 (MHRKRVERLKKREKRNKLLNS).

The protein belongs to the CGR1 family.

The protein resides in the nucleus. It is found in the nucleolus. Its function is as follows. Involved in nucleolar integrity and required for processing of the pre-rRNA for the 60S ribosome subunit. The chain is rRNA-processing protein cgrA (cgrA) from Emericella nidulans (strain FGSC A4 / ATCC 38163 / CBS 112.46 / NRRL 194 / M139) (Aspergillus nidulans).